The following is an 886-amino-acid chain: Envelope glycoprotein GP350 (886 aa).

The Virion surface portion of the chain corresponds to 1 to 839 (MEAALLVCQY…TSQPRFSNLS (839 aa)). N-linked (GlcNAc...) asparagine; by host glycans are attached at residues N47, N87, N114, N166, N169, N195, N229, N277, N318, N328, N345, N356, N378, N386, N411, N435, N443, N457, N497, N519, N533, N554, N568, N589, N603, N606, N624, and N635. The segment at 423-810 (KAPESTTTSP…PSTSSKLRPR (388 aa)) is disordered. A compositionally biased stretch (low complexity) spans 428–437 (TTTSPTLNTT). Residues 442–488 (PNTTTGLPSSTHVPTNLTAPASTGPTVSTADVTSPTPAGTTSGASPV) are compositionally biased toward polar residues. Residues 507–595 (TSPTSAVTTP…PTPNATSPTV (89 aa)) are compositionally biased toward low complexity. Residues 596–637 (GETSPQANTTNHTLGGTSSTPVVTSPPKNATSAVTTGQHNIT) show a composition bias toward polar residues. The span at 638 to 660 (SSSTSSMSLRPSSISETLSPSTS) shows a compositional bias: low complexity. Residues N662 and N680 are each glycosylated (N-linked (GlcNAc...) asparagine; by host). Positions 684–699 (VTPASTSTHHVSTSSP) are enriched in low complexity. A compositionally biased stretch (polar residues) spans 704–720 (GTTSQASGPGNSSTSTK). 4 N-linked (GlcNAc...) asparagine; by host glycosylation sites follow: N714, N725, N734, and N759. Residues 733 to 760 (KNATSPQAPSGQKTAVPTVTSTGGKANS) are compositionally biased toward polar residues. The span at 761–771 (TTGGKHTTGHG) shows a compositional bias: low complexity. Polar residues predominate over residues 773–806 (RTSTEPTTDYGGDSTTPRTRYNATTYLPPSTSSK). 2 N-linked (GlcNAc...) asparagine; by host glycosylation sites follow: N794 and N837. A helical transmembrane segment spans residues 840-860 (MLVLQWASLAVLTLLLLLVMA). The Intravirion segment spans residues 861–886 (DCAFRRNLSTSHTYTTPPYDDAETYV).

This sequence belongs to the Epstein-Barr GP350 family. As to quaternary structure, interacts with host CR2. In terms of processing, extensively glycosylated.

It is found in the virion membrane. The protein localises to the host membrane. In terms of biological role, initiates virion attachment to host B-lymphocyte cell, leading to virus entry. Acts by binding to host CR2 at the surface of B-lymphocytes, facilitating the binding of viral glycoprotein gp42 to HLA class II molecules. Attachment triggers virion-host membrane fusion and invasion of the host cell. This chain is Envelope glycoprotein GP350, found in Homo sapiens (Human).